A 201-amino-acid polypeptide reads, in one-letter code: Glutathione peroxidase 1, mitochondrial (201 aa).

The transit peptide at 1 to 27 directs the protein to the mitochondrion; sequence MLLTRKNVAVRPARAARRDVRAMSLLG. Residue selenocysteine 75 is part of the active site. Residue selenocysteine 75 is a non-standard amino acid, selenocysteine.

Its subcellular location is the mitochondrion. It carries out the reaction 2 glutathione + H2O2 = glutathione disulfide + 2 H2O. Its function is as follows. May constitute a glutathione peroxidase-like protective system against oxidative stresses. Hydrogen peroxide, tert-butyl hydroperoxide and cumene, but not phosphatidylcholine hydroperoxide, can act as acceptors. The sequence is that of Glutathione peroxidase 1, mitochondrial from Chlamydomonas reinhardtii (Chlamydomonas smithii).